The sequence spans 177 residues: MSRIGKKAVEIPSGVTAAIDGGQLSVKGPKGTLAMSLSDNIKYEVGDGSISVQPANDSREARAFWGMQRTLVQNLVTGVTEGFTKVLEITGVGYRANAQGKNLKLQLGYSHDVDFAVPDGIEIKTPDNTTIEISGIDKQQVGQVAAEIRRWRKPEPYKGKGIKYRGEYIFRKEGKKK.

It belongs to the universal ribosomal protein uL6 family. Part of the 50S ribosomal subunit.

Its function is as follows. This protein binds to the 23S rRNA, and is important in its secondary structure. It is located near the subunit interface in the base of the L7/L12 stalk, and near the tRNA binding site of the peptidyltransferase center. In Sphingopyxis alaskensis (strain DSM 13593 / LMG 18877 / RB2256) (Sphingomonas alaskensis), this protein is Large ribosomal subunit protein uL6.